The following is a 257-amino-acid chain: Acetylglutamate kinase (257 aa).

Substrate is bound by residues G41–G42, R63, and N156.

This sequence belongs to the acetylglutamate kinase family. ArgB subfamily.

The protein localises to the cytoplasm. The catalysed reaction is N-acetyl-L-glutamate + ATP = N-acetyl-L-glutamyl 5-phosphate + ADP. It participates in amino-acid biosynthesis; L-arginine biosynthesis; N(2)-acetyl-L-ornithine from L-glutamate: step 2/4. Functionally, catalyzes the ATP-dependent phosphorylation of N-acetyl-L-glutamate. The protein is Acetylglutamate kinase of Geobacillus sp. (strain WCH70).